The following is a 206-amino-acid chain: Uracil phosphoribosyltransferase (206 aa).

5-phospho-alpha-D-ribose 1-diphosphate is bound by residues arginine 76, arginine 101, and 128-136; that span reads DPMLATGGS. Residues isoleucine 191 and 196 to 198 each bind uracil; that span reads GDA. 5-phospho-alpha-D-ribose 1-diphosphate is bound at residue aspartate 197.

Belongs to the UPRTase family. Mg(2+) serves as cofactor.

The enzyme catalyses UMP + diphosphate = 5-phospho-alpha-D-ribose 1-diphosphate + uracil. The protein operates within pyrimidine metabolism; UMP biosynthesis via salvage pathway; UMP from uracil: step 1/1. With respect to regulation, allosterically activated by GTP. Its function is as follows. Catalyzes the conversion of uracil and 5-phospho-alpha-D-ribose 1-diphosphate (PRPP) to UMP and diphosphate. In Malacoplasma penetrans (strain HF-2) (Mycoplasma penetrans), this protein is Uracil phosphoribosyltransferase.